We begin with the raw amino-acid sequence, 636 residues long: Transcription termination factor FttA (636 aa).

The interval Ser3–Leu70 is KHa. The segment at Met71–Pro138 is KHb. The interval Trp179–His383 is metallo-beta-lactamase N-terminus. Zn(2+)-binding residues include His242, His244, Asp246, His247, His329, and Asp352. The tract at residues Glu384–Ser577 is beta-Casp. Positions Gly578–Gln636 are metallo-beta-lactamase C-terminus. His603 is a Zn(2+) binding site.

The protein belongs to the metallo-beta-lactamase superfamily. RNA-metabolizing metallo-beta-lactamase-like family. FttA subfamily. Homodimer. Interacts with RNA polymerase (RNAP), interacts with the Spt4-Spt5 complex. Does not seem to interact with the RNA degrading exosome. Zn(2+) is required as a cofactor.

Its activity is regulated as follows. Most active at 0.5 M or 0.7 M NaCl, less active at 1.0 M NaCl. Nuclease activity is inhibited by N,N,Tetrakis-(2-pyridylmethyl)-ethylene diamine (TPEN), a specific chelator of zinc ions. In terms of biological role, terminates transcription on the whole genome. Termination is linked to FttA-mediated RNA cleavage and does not require NTP hydrolysis. Cleaves endonucleolytically at the RNA exit channel of RNA polymerase (RNAP); the 5'-3' exonuclease activity of this protein degrades the nascent RNA released from RNAP. Its function is as follows. An RNA nuclease, it bind single-stranded RNA (ssRNA) with a preference for U-rich sequences. The polypeptide is Transcription termination factor FttA (Methanothermobacter thermautotrophicus (strain ATCC 29096 / DSM 1053 / JCM 10044 / NBRC 100330 / Delta H) (Methanobacterium thermoautotrophicum)).